We begin with the raw amino-acid sequence, 97 residues long: Ferredoxin-thioredoxin reductase, variable chain (97 aa).

This sequence belongs to the ferredoxin thioredoxin reductase alpha subunit family. Heterodimer of subunit A (variable subunit) and subunit B (catalytic subunit). Heterodimeric FTR forms a complex with ferredoxin and thioredoxin.

The protein localises to the plastid. The protein resides in the chloroplast. Its function is as follows. Variable subunit of the ferredoxin-thioredoxin reductase (FTR), which catalyzes the two-electron reduction of thioredoxins by the electrons provided by reduced ferredoxin. The protein is Ferredoxin-thioredoxin reductase, variable chain of Zea mays (Maize).